The primary structure comprises 294 residues: Nucleotide-binding protein CA_C0511 (294 aa).

Residue glycine 8–threonine 15 coordinates ATP. Residue aspartate 59–glycine 62 coordinates GTP.

It belongs to the RapZ-like family.

Displays ATPase and GTPase activities. The sequence is that of Nucleotide-binding protein CA_C0511 from Clostridium acetobutylicum (strain ATCC 824 / DSM 792 / JCM 1419 / IAM 19013 / LMG 5710 / NBRC 13948 / NRRL B-527 / VKM B-1787 / 2291 / W).